Consider the following 272-residue polypeptide: Prohibitin 1 (272 aa).

The residue at position 2 (alanine 2) is an N-acetylalanine. Threonine 91 carries the phosphothreonine modification. N6-acetyllysine is present on residues lysine 128 and lysine 186. Residues 177 to 211 (KEFTEAVEAKQVAQQEAERARFVVEKAEQQKKAAI) are a coiled coil. Lysine 202 carries the N6-acetyllysine; alternate modification. Lysine 202 carries the N6-succinyllysine; alternate modification. A Phosphotyrosine modification is found at tyrosine 249.

Belongs to the prohibitin family. The mitochondrial prohibitin complex consists of two subunits (PHB1 and PHB2), assembled into a membrane-associated ring-shaped supercomplex of approximately 1 mDa. Interacts with STOML2. Interacts with MAP1LC3B (membrane-bound form LC3-II); the interaction requires PHB2 and takes place upon Parkin-mediated mitochondrial damage. Interacts with STAT3 (unphosphorylated or phosphorylated at 'Ser-727'). Interacts with CLPB. Interacts with CD86 (via cytoplasmic domain); the interactions increases after priming with CD40.

Its subcellular location is the mitochondrion inner membrane. The protein localises to the nucleus. It is found in the cytoplasm. The protein resides in the cell membrane. Protein with pleiotropic attributes mediated in a cell-compartment- and tissue-specific manner, which include the plasma membrane-associated cell signaling functions, mitochondrial chaperone, and transcriptional co-regulator of transcription factors in the nucleus. Plays a role in adipose tissue and glucose homeostasis in a sex-specific manner. Contributes to pulmonary vascular remodeling by accelerating proliferation of pulmonary arterial smooth muscle cells. Its function is as follows. In the mitochondria, together with PHB2, forms large ring complexes (prohibitin complexes) in the inner mitochondrial membrane (IMM) and functions as a chaperone protein that stabilizes mitochondrial respiratory enzymes and maintains mitochondrial integrity in the IMM, which is required for mitochondrial morphogenesis, neuronal survival, and normal lifespan. The prohibitin complex, with DNAJC19, regulates cardiolipin remodeling and the protein turnover of OMA1 in a cardiolipin-binding manner. Regulates mitochondrial respiration activity playing a role in cellular aging. The prohibitin complex plays a role of mitophagy receptor involved in targeting mitochondria for autophagic degradation. Involved in mitochondrial-mediated antiviral innate immunity, activates RIG-I-mediated signal transduction and production of IFNB1 and proinflammatory cytokine IL6. In terms of biological role, in the nucleus, acts as a transcription coregulator, enhances promoter binding by TP53, a transcription factor it activates, but reduces the promoter binding by E2F1, a transcription factor it represses. Interacts with STAT3 to affect IL17 secretion in T-helper Th17 cells. Functionally, in the plasma membrane, cooperates with CD86 to mediate CD86-signaling in B lymphocytes that regulates the level of IgG1 produced through the activation of distal signaling intermediates. Upon CD40 engagement, required to activate NF-kappa-B signaling pathway via phospholipase C and protein kinase C activation. The protein is Prohibitin 1 (PHB1) of Bos taurus (Bovine).